Consider the following 328-residue polypeptide: Cytochrome c biogenesis protein CcsA (328 aa).

8 helical membrane passes run 13 to 33 (ISFS…LVNL), 46 to 66 (GIVI…IYSG), 73 to 93 (LYES…ISYF), 101 to 121 (LNAI…SGLL), 146 to 166 (MILG…LLVI), 234 to 254 (IISL…VWAN), 263 to 283 (WDPK…FLHI), and 295 to 315 (AIVA…VNLL).

The protein belongs to the CcmF/CycK/Ccl1/NrfE/CcsA family. In terms of assembly, may interact with Ccs1.

The protein localises to the plastid. Its subcellular location is the chloroplast thylakoid membrane. In terms of biological role, required during biogenesis of c-type cytochromes (cytochrome c6 and cytochrome f) at the step of heme attachment. This chain is Cytochrome c biogenesis protein CcsA, found in Arabis hirsuta (Hairy rock-cress).